Here is a 625-residue protein sequence, read N- to C-terminus: Probable potassium transport system protein Kup (625 aa).

12 consecutive transmembrane segments (helical) span residues 10–30 (LAAL…TSPL), 50–70 (LLGV…LKYV), 102–122 (YFPL…DSVI), 142–162 (FDPY…SVQA), 172–192 (FGPI…VNII), 215–235 (FLAF…EALY), 250–270 (WFLV…ALLL), 284–304 (LGAW…IIAS), 340–360 (IYIP…VVGF), 369–389 (AYGI…FFVI), 397–417 (LLLC…LFSA), and 422–442 (LFHG…LMLT).

This sequence belongs to the HAK/KUP transporter (TC 2.A.72) family.

The protein localises to the cell inner membrane. The catalysed reaction is K(+)(in) + H(+)(in) = K(+)(out) + H(+)(out). Its function is as follows. Transport of potassium into the cell. Likely operates as a K(+):H(+) symporter. The sequence is that of Probable potassium transport system protein Kup from Janthinobacterium sp. (strain Marseille) (Minibacterium massiliensis).